The chain runs to 801 residues: Phenylalanine--tRNA ligase beta subunit (801 aa).

The 115-residue stretch at 39–153 (AEGLSKLVVG…EDAVPGESIF (115 aa)) folds into the tRNA-binding domain. Residues 406–481 (TDDIQVSTSL…RIYGYDKLPT (76 aa)) enclose the B5 domain. D459, D465, E468, and E469 together coordinate Mg(2+). Positions 708-801 (TKFPAVSRDI…LTEKVGAEVR (94 aa)) constitute an FDX-ACB domain.

This sequence belongs to the phenylalanyl-tRNA synthetase beta subunit family. Type 1 subfamily. Tetramer of two alpha and two beta subunits. Mg(2+) is required as a cofactor.

The protein resides in the cytoplasm. The enzyme catalyses tRNA(Phe) + L-phenylalanine + ATP = L-phenylalanyl-tRNA(Phe) + AMP + diphosphate + H(+). The polypeptide is Phenylalanine--tRNA ligase beta subunit (Streptococcus mutans serotype c (strain ATCC 700610 / UA159)).